The chain runs to 1011 residues: Vacuolar membrane protease (1011 aa).

Topologically, residues 1-9 (MSNPFAFRS) are cytoplasmic. The chain crosses the membrane as a helical span at residues 10–30 (AQVTFWTTVVYLALLVPLVVI). Residues 31 to 378 (NEGVPPVQPD…TFVLFGLRGM (348 aa)) lie on the Vacuolar side of the membrane. Residues N50 and N106 are each glycosylated (N-linked (GlcNAc...) asparagine). Residues H159 and D171 each coordinate Zn(2+). The active-site Proton acceptor is the E205. Zn(2+) contacts are provided by E206, E231, and H304. A glycan (N-linked (GlcNAc...) asparagine) is linked at N331. The helical transmembrane segment at 379–399 (FAWSLTVLIVGPLTLFGMMYL) threads the bilayer. Residues 400 to 439 (VHKQGKGYAFHTKLRATSDSSSEDGDDEDGEVIRLGGWKG) lie on the Cytoplasmic side of the membrane. Residues 440 to 460 (FFRFPFALIVAGALVTGAALL) form a helical membrane-spanning segment. The Vacuolar segment spans residues 461 to 471 (LRKMNPFIIYS). The helical transmembrane segment at 472–492 (SEYAVWAMMISLFYFGFWLIM) threads the bilayer. The Cytoplasmic segment spans residues 493 to 505 (RGSSYTRPSALHR). The helical transmembrane segment at 506 to 526 (LYVHIWLFILGWVALVFATVL) threads the bilayer. Topologically, residues 527 to 536 (EDRMRIASGY) are vacuolar. A helical transmembrane segment spans residues 537 to 557 (IFVFWESQVFLATLVAVCELF). Residues 558-682 (SLPRKIDFAR…WSGPMVTSTW (125 aa)) lie on the Cytoplasmic side of the membrane. Residues 595–609 (EATSPQRAGQSSNSP) are compositionally biased toward polar residues. Disordered stretches follow at residues 595–627 (EATS…LFRK) and 650–671 (IMDS…EGEQ). Residues 610-622 (QEDDEDDVPDEET) show a composition bias toward acidic residues. A helical membrane pass occupies residues 683-703 (ILQFLLLGPFMVILGGQVGLL). Residues 704–719 (LTSAVNQTGVDGSSLL) are Vacuolar-facing. A glycan (N-linked (GlcNAc...) asparagine) is linked at N709. The helical transmembrane segment at 720-740 (APYLMIAALSAILLMPLSPFI) threads the bilayer. Topologically, residues 741-747 (HRVTKHV) are cytoplasmic. A helical transmembrane segment spans residues 748-768 (PLFLLAVAFATLIYSLVAFPF). The Vacuolar segment spans residues 769 to 1011 (SPRAPYKTFF…LVEGSKAFKV (243 aa)). N872 carries an N-linked (GlcNAc...) asparagine glycan.

This sequence belongs to the peptidase M28 family. Requires Zn(2+) as cofactor.

It localises to the vacuole membrane. Functionally, may be involved in vacuolar sorting and osmoregulation. In Pyricularia oryzae (strain 70-15 / ATCC MYA-4617 / FGSC 8958) (Rice blast fungus), this protein is Vacuolar membrane protease.